A 788-amino-acid chain; its full sequence is Cadherin-10 (788 aa).

A signal peptide spans methionine 1–proline 22. The propeptide occupies glutamate 23–arginine 54. The Extracellular segment spans residues glutamate 23 to alanine 613. Cadherin domains lie at tryptophan 56–phenylalanine 160, proline 161–phenylalanine 269, proline 270–phenylalanine 384, serine 385–phenylalanine 489, and phenylalanine 489–leucine 603. N-linked (GlcNAc...) asparagine glycosylation is present at asparagine 256. N-linked (GlcNAc...) asparagine glycans are attached at residues asparagine 456 and asparagine 534. The chain crosses the membrane as a helical span at residues leucine 614–leucine 634. The Cytoplasmic portion of the chain corresponds to lysine 635–alanine 788. Residue serine 784 is modified to Phosphoserine.

Its subcellular location is the cell membrane. Its function is as follows. Cadherins are calcium-dependent cell adhesion proteins. They preferentially interact with themselves in a homophilic manner in connecting cells; cadherins may thus contribute to the sorting of heterogeneous cell types. In Mus musculus (Mouse), this protein is Cadherin-10 (Cdh10).